The chain runs to 188 residues: NADH-quinone oxidoreductase subunit B 1 (188 aa).

[4Fe-4S] cluster contacts are provided by cysteine 39, cysteine 40, cysteine 105, and cysteine 134.

This sequence belongs to the complex I 20 kDa subunit family. NDH-1 is composed of 14 different subunits. Subunits NuoB, C, D, E, F, and G constitute the peripheral sector of the complex. The cofactor is [4Fe-4S] cluster.

It is found in the cell inner membrane. The enzyme catalyses a quinone + NADH + 5 H(+)(in) = a quinol + NAD(+) + 4 H(+)(out). Its function is as follows. NDH-1 shuttles electrons from NADH, via FMN and iron-sulfur (Fe-S) centers, to quinones in the respiratory chain. The immediate electron acceptor for the enzyme in this species is believed to be ubiquinone. Couples the redox reaction to proton translocation (for every two electrons transferred, four hydrogen ions are translocated across the cytoplasmic membrane), and thus conserves the redox energy in a proton gradient. In Solibacter usitatus (strain Ellin6076), this protein is NADH-quinone oxidoreductase subunit B 1.